Reading from the N-terminus, the 876-residue chain is Alanine--tRNA ligase (876 aa).

Zn(2+)-binding residues include His565, His569, Cys667, and His671.

This sequence belongs to the class-II aminoacyl-tRNA synthetase family. Zn(2+) serves as cofactor.

The protein resides in the cytoplasm. It catalyses the reaction tRNA(Ala) + L-alanine + ATP = L-alanyl-tRNA(Ala) + AMP + diphosphate. Its function is as follows. Catalyzes the attachment of alanine to tRNA(Ala) in a two-step reaction: alanine is first activated by ATP to form Ala-AMP and then transferred to the acceptor end of tRNA(Ala). Also edits incorrectly charged Ser-tRNA(Ala) and Gly-tRNA(Ala) via its editing domain. The protein is Alanine--tRNA ligase of Desulfosudis oleivorans (strain DSM 6200 / JCM 39069 / Hxd3) (Desulfococcus oleovorans).